The sequence spans 89 residues: UPF0297 protein lp_2275 (89 aa).

The protein belongs to the UPF0297 family.

The chain is UPF0297 protein lp_2275 from Lactiplantibacillus plantarum (strain ATCC BAA-793 / NCIMB 8826 / WCFS1) (Lactobacillus plantarum).